Reading from the N-terminus, the 225-residue chain is Methylthioribulose-1-phosphate dehydratase (225 aa).

Zn(2+) is bound by residues His-106 and His-108.

The protein belongs to the aldolase class II family. MtnB subfamily. Zn(2+) is required as a cofactor.

It catalyses the reaction 5-(methylsulfanyl)-D-ribulose 1-phosphate = 5-methylsulfanyl-2,3-dioxopentyl phosphate + H2O. It participates in amino-acid biosynthesis; L-methionine biosynthesis via salvage pathway; L-methionine from S-methyl-5-thio-alpha-D-ribose 1-phosphate: step 2/6. Its function is as follows. Catalyzes the dehydration of methylthioribulose-1-phosphate (MTRu-1-P) into 2,3-diketo-5-methylthiopentyl-1-phosphate (DK-MTP-1-P). This Xanthomonas oryzae pv. oryzae (strain MAFF 311018) protein is Methylthioribulose-1-phosphate dehydratase.